We begin with the raw amino-acid sequence, 206 residues long: Small ribosomal subunit protein eS1 (206 aa).

It belongs to the eukaryotic ribosomal protein eS1 family.

The protein is Small ribosomal subunit protein eS1 of Methanocorpusculum labreanum (strain ATCC 43576 / DSM 4855 / Z).